The chain runs to 1117 residues: WD repeat and HMG-box DNA-binding protein 1 (1117 aa).

WD repeat units lie at residues 11 to 50 (GHTEGHTEVCFDDSGSYIVTCGSDGDVRMWEDLDDDDPKS), 52 to 91 (NVGEKAFSCALKNGKLVTAVSNNTVQVYTFPEGVPDGILT), 93 to 131 (FTTNANHVVFNGAGNKIAAGSSDFLVKVVDVMDNSQQQT), 134 to 173 (GHDAPVLSLSFDPKDIFLASASCDGTVRVWNISDQTCAVS), 184 to 223 (VNAKSICRLAWQPKAGKLLAVPVEKSVKLYRRETWSNPFD), 228 to 267 (SISQTLNIVTWSPCGQYLAAGAINGLIVVWNVETKDCMER), and 271 to 310 (EKGYAICGLAWHPTCSRICYTDVEGNLGVLENVCDLSGKV). Residues Ser333 and Ser377 each carry the phosphoserine modification. Lys390 is covalently cross-linked (Glycyl lysine isopeptide (Lys-Gly) (interchain with G-Cter in SUMO2)). The residue at position 664 (Lys664) is an N6-acetyllysine. The disordered stretch occupies residues 816–885 (LAETQSEEEK…NLFQSANSSD (70 aa)). Phosphothreonine is present on Thr819. Ser821 carries the post-translational modification Phosphoserine. Residues 861-872 (DTVSEEKPESHN) show a composition bias toward basic and acidic residues. Over residues 873-885 (HGQNLFQSANSSD) the composition is skewed to polar residues. 2 positions are modified to phosphoserine: Ser910 and Ser923. The interval 911–1005 (SKEPAVSANS…AVCLQNSENQ (95 aa)) is disordered. Positions 917 to 943 (SANSTRSANILDSMNKSSRKSTSLNRM) are enriched in polar residues. Residue Lys953 is modified to N6-acetyllysine. The span at 962-974 (KQASAASYFQKRT) shows a compositional bias: polar residues. A compositionally biased stretch (basic and acidic residues) spans 975–987 (PQADKTEEVKENP). Over residues 988–1004 (KSSSSDAPAVCLQNSEN) the composition is skewed to polar residues. Residues 1004–1073 (NQRPKTGFQM…SDGAEAKKRK (70 aa)) constitute a DNA-binding region (HMG box). Ser1030 bears the Phosphoserine mark. Positions 1054–1074 (WTNKAKGETASDGAEAKKRKR) are disordered. Residue Lys1116 forms a Glycyl lysine isopeptide (Lys-Gly) (interchain with G-Cter in SUMO1); alternate linkage. Residue Lys1116 forms a Glycyl lysine isopeptide (Lys-Gly) (interchain with G-Cter in SUMO2); alternate linkage.

As to quaternary structure, trimer. Interacts with the polymerase alpha catalytic subunit POLA1. Interacts with MCM10. Interacts with DNA2. Interacts with CDC45 and GINS2 subunit of GINS complex; these interactions associate WDHD1 with the CMG helicase complex.

It localises to the nucleus. It is found in the nucleoplasm. Core replisome component that acts as a replication initiation factor. Binds directly to the CMG complex and functions as a hub to recruit additional proteins to the replication fork. The protein is WD repeat and HMG-box DNA-binding protein 1 (Wdhd1) of Mus musculus (Mouse).